A 441-amino-acid polypeptide reads, in one-letter code: MSVYAHLSQTPAHPSARIQPVMILAGGTGGHIFPGLAVAKVLSARGVPVTWLGADGAMETRLVPQHDIPIDTLAITGLRGKGMVKLLGAPLRVMRAVRAAGFVLRKRQPRAVISFGGFAAGPGGLAARLLGAPLLVHEQNRAPGMTNKVLSRFARRVLTGFPGSFAGEEAVGNPVRAEIAALPAPADRLVGRTGPVCVLVLGGSQGARVLNQAVPTALAALGHPDVEVRHQCGEKLRAEAEVAYAQASVNASVEPFIADMAAAYAWADLVVCRAGASTLAELCAAGVGSVLVPFAAAVDDHQTRNAEYLVGADAAVLLKQDDSLAVRLQQVLQTLLTDPARRLSMANAARTLAKPDAAERIADIILQEAGTGDRQPPAVEERAGFGIGKEQQHKQDSMQNSVDGQFSGRSTAAVANLQCRSLFDSHRLAILTPGTFAGGAA.

UDP-N-acetyl-alpha-D-glucosamine contacts are provided by residues 28–30 (TGG), Asn140, Arg176, Ser204, Ile257, and Gln302.

Belongs to the glycosyltransferase 28 family. MurG subfamily.

Its subcellular location is the cell inner membrane. It catalyses the reaction di-trans,octa-cis-undecaprenyl diphospho-N-acetyl-alpha-D-muramoyl-L-alanyl-D-glutamyl-meso-2,6-diaminopimeloyl-D-alanyl-D-alanine + UDP-N-acetyl-alpha-D-glucosamine = di-trans,octa-cis-undecaprenyl diphospho-[N-acetyl-alpha-D-glucosaminyl-(1-&gt;4)]-N-acetyl-alpha-D-muramoyl-L-alanyl-D-glutamyl-meso-2,6-diaminopimeloyl-D-alanyl-D-alanine + UDP + H(+). It participates in cell wall biogenesis; peptidoglycan biosynthesis. Functionally, cell wall formation. Catalyzes the transfer of a GlcNAc subunit on undecaprenyl-pyrophosphoryl-MurNAc-pentapeptide (lipid intermediate I) to form undecaprenyl-pyrophosphoryl-MurNAc-(pentapeptide)GlcNAc (lipid intermediate II). The polypeptide is UDP-N-acetylglucosamine--N-acetylmuramyl-(pentapeptide) pyrophosphoryl-undecaprenol N-acetylglucosamine transferase (Xanthomonas oryzae pv. oryzae (strain MAFF 311018)).